Here is a 719-residue protein sequence, read N- to C-terminus: Phosphoribosylformylglycinamidine synthase subunit PurL (719 aa).

His-47 is a catalytic residue. Positions 50 and 89 each coordinate ATP. Glu-91 is a binding site for Mg(2+). Residues 92–95 (SHNH) and Arg-114 contribute to the substrate site. The Proton acceptor role is filled by His-93. A Mg(2+)-binding site is contributed by Asp-115. A substrate-binding site is contributed by Gln-238. Asp-266 is a binding site for Mg(2+). 310–312 (ESQ) is a binding site for substrate. Positions 488 and 525 each coordinate ATP. Asn-526 is a Mg(2+) binding site. Residue Ser-528 coordinates substrate.

It belongs to the FGAMS family. As to quaternary structure, monomer. Part of the FGAM synthase complex composed of 1 PurL, 1 PurQ and 2 PurS subunits.

It is found in the cytoplasm. The catalysed reaction is N(2)-formyl-N(1)-(5-phospho-beta-D-ribosyl)glycinamide + L-glutamine + ATP + H2O = 2-formamido-N(1)-(5-O-phospho-beta-D-ribosyl)acetamidine + L-glutamate + ADP + phosphate + H(+). It functions in the pathway purine metabolism; IMP biosynthesis via de novo pathway; 5-amino-1-(5-phospho-D-ribosyl)imidazole from N(2)-formyl-N(1)-(5-phospho-D-ribosyl)glycinamide: step 1/2. Its function is as follows. Part of the phosphoribosylformylglycinamidine synthase complex involved in the purines biosynthetic pathway. Catalyzes the ATP-dependent conversion of formylglycinamide ribonucleotide (FGAR) and glutamine to yield formylglycinamidine ribonucleotide (FGAM) and glutamate. The FGAM synthase complex is composed of three subunits. PurQ produces an ammonia molecule by converting glutamine to glutamate. PurL transfers the ammonia molecule to FGAR to form FGAM in an ATP-dependent manner. PurS interacts with PurQ and PurL and is thought to assist in the transfer of the ammonia molecule from PurQ to PurL. The sequence is that of Phosphoribosylformylglycinamidine synthase subunit PurL from Jannaschia sp. (strain CCS1).